The following is a 774-amino-acid chain: Pentatricopeptide repeat-containing protein At4g20770 (774 aa).

20 PPR repeats span residues 5 to 39, 40 to 70, 71 to 101, 102 to 136, 137 to 171, 172 to 203, 204 to 238, 239 to 270, 283 to 313, 314 to 348, 349 to 379, 380 to 414, 415 to 449, 450 to 480, 482 to 516, 518 to 552, 553 to 583, 584 to 618, 619 to 654, and 655 to 685; these read GNKY…GMKS, DTYL…MSVR, DVYS…MPER, DVVS…GFLP, SRFT…GLDK, NIFV…LSQP, NEVS…GVQV, DSVC…LGKQ, DLHL…MPEV, NVVS…GFQP, NEVT…IPQP, SVSA…NLKP, DKTT…EISK, NSHI…CINE, DIAC…AVLC, NETS…GYVS, DSFV…VLRK, NTVI…GEKP, DGIT…GIEP, and ELDH…TPYK. Residues 690–765 form a type E motif region; that stretch reads LWEILLSSCR…TPGQSWTTYG (76 aa).

This sequence belongs to the PPR family. PCMP-E subfamily.

In Arabidopsis thaliana (Mouse-ear cress), this protein is Pentatricopeptide repeat-containing protein At4g20770 (PCMP-E35).